We begin with the raw amino-acid sequence, 213 residues long: Transcription antitermination protein NusB (213 aa).

Belongs to the NusB family.

Functionally, involved in transcription antitermination. Required for transcription of ribosomal RNA (rRNA) genes. Binds specifically to the boxA antiterminator sequence of the ribosomal RNA (rrn) operons. The polypeptide is Transcription antitermination protein NusB (Synechococcus elongatus (strain ATCC 33912 / PCC 7942 / FACHB-805) (Anacystis nidulans R2)).